The sequence spans 96 residues: Glutamyl-tRNA(Gln) amidotransferase subunit C (96 aa).

The protein belongs to the GatC family. In terms of assembly, heterotrimer of A, B and C subunits.

It catalyses the reaction L-glutamyl-tRNA(Gln) + L-glutamine + ATP + H2O = L-glutaminyl-tRNA(Gln) + L-glutamate + ADP + phosphate + H(+). It carries out the reaction L-aspartyl-tRNA(Asn) + L-glutamine + ATP + H2O = L-asparaginyl-tRNA(Asn) + L-glutamate + ADP + phosphate + 2 H(+). Allows the formation of correctly charged Asn-tRNA(Asn) or Gln-tRNA(Gln) through the transamidation of misacylated Asp-tRNA(Asn) or Glu-tRNA(Gln) in organisms which lack either or both of asparaginyl-tRNA or glutaminyl-tRNA synthetases. The reaction takes place in the presence of glutamine and ATP through an activated phospho-Asp-tRNA(Asn) or phospho-Glu-tRNA(Gln). In Nostoc sp. (strain PCC 7120 / SAG 25.82 / UTEX 2576), this protein is Glutamyl-tRNA(Gln) amidotransferase subunit C.